A 217-amino-acid chain; its full sequence is Protein 33K (217 aa).

Residues 1–142 (MPPKGNKQAI…KEKTSAIATR (142 aa)) are disordered. Residues 24–68 (QWDEEEESWDDSQAEEVSDEEEMESWESLDEELEDKPPKDEEEEI) show a composition bias toward acidic residues. Over residues 69–78 (IASAAAPSSK) the composition is skewed to low complexity. Over residues 123–136 (KRSEKTTRPRKEKT) the composition is skewed to basic and acidic residues. Residues 160 to 187 (YAIFQQSRGQQLELKVKNRSLRSLTRSC) form a necessary for nuclear subcellular location region. An RS-repeat; required for splicing enhancer activity region spans residues 166 to 186 (SRGQQLELKVKNRSLRSLTRS).

The protein belongs to the adenoviridae splicing factor family. As to quaternary structure, homooligomer. Interacts with DBP; this interaction occurs at a unique vertex during genome packaging. Interacts with IVa2; this interaction occurs at a unique vertex during genome packaging and seems to potentiate IVa2 and 33K oligomerization. Phosphorylated in vitro by human PKA and PRKDC. PRKDC inhibits, whereas PKA activates the splicing factor.

It localises to the host nucleus. Promotes alternative splicing of late transcripts by promoting splicing at weak 3' splice sites. Required for the temporal activation of major late pre-mRNA splicing at late times of infection. Induces the splicing and expression of the late capsid vertex protein. In terms of biological role, probably functions as the small terminase that is part of the molecular motor that translocates genomic DNA in empty capsid during DNA packaging. This motor is located at a unique vertex and comprises at least the IVa2 ATPase, the small terminase 33K and probably a portal. Forms a ring-like structure of about 17 nm in which genomic DNA is translocated into the capsid. Stimulates IVa2 ATPase activity in the presence of the viral genome. Once the DNA is packaged, the terminase detaches: the 33K protein is present in the empty particles, but not in the mature virions. Also involved in virion assembly. This is Protein 33K from Human adenovirus F serotype 41 (HAdV-41).